A 410-amino-acid chain; its full sequence is Adenosine receptor A2a (410 aa).

Over 1–4 (MGSS) the chain is Extracellular. Residues 5-29 (VYIMVELAIAVLAILGNVLVCWAVW) traverse the membrane as a helical segment. The Cytoplasmic segment spans residues 30–39 (INSNLQNVTN). Residues 40-63 (FFVVSLAAADIAVGVLAIPFAITI) form a helical membrane-spanning segment. At 64 to 74 (STGFCAACHGC) the chain is on the extracellular side. 3 disulfide bridges follow: Cys68–Cys154, Cys71–Cys143, and Cys74–Cys161. Residues 75-97 (LFFACFVLVLTQSSIFSLLAIAI) traverse the membrane as a helical segment. The Cytoplasmic portion of the chain corresponds to 98 to 117 (DRYIAIRIPLRYNGLVTGMR). The chain crosses the membrane as a helical span at residues 118 to 140 (AKGIIAICWVLSFAIGLTPMLGW). Residues 141 to 168 (NNCSQKDENSTKTCGEGRVTCLFEDVVP) lie on the Extracellular side of the membrane. 2 N-linked (GlcNAc...) asparagine glycosylation sites follow: Asn142 and Asn149. Glu164 is a binding site for adenosine. Residues 169–193 (MNYMVYYNFFAFVLLPLLLMLAIYL) traverse the membrane as a helical segment. Residues 194 to 229 (RIFLAARRQLKQMESQPLPGERTRSTLQKEVHAAKS) lie on the Cytoplasmic side of the membrane. The helical transmembrane segment at 230 to 253 (LAIIVGLFALCWLPLHIINCFTFF) threads the bilayer. Asn248 serves as a coordination point for adenosine. A disulfide bridge links Cys254 with Cys257. Residues 254–261 (CSTCQHAP) lie on the Extracellular side of the membrane. The chain crosses the membrane as a helical span at residues 262–285 (PWLMYLAIILSHSNSVVNPFIYAY). Ser272 and His273 together coordinate adenosine. The Cytoplasmic segment spans residues 286-410 (RIREFRQTFR…ASWSSEFAPS (125 aa)). An interaction with GAS2L2 region spans residues 322-410 (HSTEGEQVSL…ASWSSEFAPS (89 aa)). The disordered stretch occupies residues 342–410 (ANGSAPHSGR…ASWSSEFAPS (69 aa)). A compositionally biased stretch (basic and acidic residues) spans 377–389 (TQEHQEGQEHPGL). The span at 401–410 (ASWSSEFAPS) shows a compositional bias: polar residues.

The protein belongs to the G-protein coupled receptor 1 family. Interacts (via cytoplasmic C-terminal domain) with USP4; the interaction is direct. May interact with DRD4. Interacts with NECAB2. Interacts (via cytoplasmic C-terminal domain) with GAS2L2; interaction enhances receptor-mediated adenylyl cyclase activity. In terms of processing, ubiquitinated. Deubiquitinated by USP4; leading to stabilization and expression at the cell surface.

The protein localises to the cell membrane. Functionally, receptor for adenosine. The activity of this receptor is mediated by G proteins which activate adenylyl cyclase. The sequence is that of Adenosine receptor A2a (Adora2a) from Mus musculus (Mouse).